Here is a 450-residue protein sequence, read N- to C-terminus: tRNA-2-methylthio-N(6)-dimethylallyladenosine synthase (450 aa).

Residues 14 to 132 enclose the MTTase N-terminal domain; sequence GEFFIETWGC…FPNYLNEVKK (119 aa). Residues Cys23, Cys59, Cys93, Cys169, Cys173, and Cys176 each contribute to the [4Fe-4S] cluster site. Residues 155–385 enclose the Radical SAM core domain; that stretch reads RKNSMKAFVT…VEVVNEISAK (231 aa). Residues 388-450 enclose the TRAM domain; the sequence is KAYEGKIEEV…NSFSLTGEEI (63 aa).

This sequence belongs to the methylthiotransferase family. MiaB subfamily. Monomer. It depends on [4Fe-4S] cluster as a cofactor.

It is found in the cytoplasm. The catalysed reaction is N(6)-dimethylallyladenosine(37) in tRNA + (sulfur carrier)-SH + AH2 + 2 S-adenosyl-L-methionine = 2-methylsulfanyl-N(6)-dimethylallyladenosine(37) in tRNA + (sulfur carrier)-H + 5'-deoxyadenosine + L-methionine + A + S-adenosyl-L-homocysteine + 2 H(+). Catalyzes the methylthiolation of N6-(dimethylallyl)adenosine (i(6)A), leading to the formation of 2-methylthio-N6-(dimethylallyl)adenosine (ms(2)i(6)A) at position 37 in tRNAs that read codons beginning with uridine. The protein is tRNA-2-methylthio-N(6)-dimethylallyladenosine synthase of Clostridium botulinum (strain Langeland / NCTC 10281 / Type F).